The chain runs to 296 residues: 4-diphosphocytidyl-2-C-methyl-D-erythritol kinase (296 aa).

K18 is an active-site residue. 102–112 (PMGGGIGGGSS) is an ATP binding site. D144 is an active-site residue.

This sequence belongs to the GHMP kinase family. IspE subfamily.

It catalyses the reaction 4-CDP-2-C-methyl-D-erythritol + ATP = 4-CDP-2-C-methyl-D-erythritol 2-phosphate + ADP + H(+). Its pathway is isoprenoid biosynthesis; isopentenyl diphosphate biosynthesis via DXP pathway; isopentenyl diphosphate from 1-deoxy-D-xylulose 5-phosphate: step 3/6. Catalyzes the phosphorylation of the position 2 hydroxy group of 4-diphosphocytidyl-2C-methyl-D-erythritol. This is 4-diphosphocytidyl-2-C-methyl-D-erythritol kinase from Vibrio atlanticus (strain LGP32) (Vibrio splendidus (strain Mel32)).